The primary structure comprises 506 residues: Maturase K (506 aa).

The protein belongs to the intron maturase 2 family. MatK subfamily.

It localises to the plastid. It is found in the chloroplast. Usually encoded in the trnK tRNA gene intron. Probably assists in splicing its own and other chloroplast group II introns. The sequence is that of Maturase K from Melilotus indicus (Sourclover).